A 781-amino-acid polypeptide reads, in one-letter code: Chloride channel protein CLC-f (781 aa).

2 disordered regions span residues 1-41 (MSSG…QSPA) and 79-98 (RERH…EEDG). Basic and acidic residues predominate over residues 10-20 (NEDRHLLRSTD). 12 consecutive transmembrane segments (helical) span residues 129–149 (WALL…VAGF), 184–204 (ILLI…LLEI), 221–241 (FLAG…LGTG), 250–270 (SVDI…NNRE), 279–299 (GAAS…FFAI), 314–334 (FTTA…NALL), 350–370 (AAEL…SVVF), 388–408 (FGLP…IIAL), 433–453 (APGI…TALC), 457–477 (GLVG…GAVF), 502–522 (ALVG…TSVL), and 523–543 (LLFE…AVGL). A disordered region spans residues 553 to 584 (QGKESDSSEGRSTGRGYSSLSPSERKTEGVWR). Positions 575-584 (SERKTEGVWR) are enriched in basic and acidic residues. CBS domains follow at residues 621-677 (MSKN…NAST) and 699-763 (QERG…EMSR). Residues 726-746 (QLPVVKRGEVIHKGKRRKLLG) form a helical membrane-spanning segment.

It belongs to the chloride channel (TC 2.A.49) family. In terms of assembly, homodimer.

The protein localises to the membrane. Its function is as follows. Voltage-gated chloride channel. In Arabidopsis thaliana (Mouse-ear cress), this protein is Chloride channel protein CLC-f (CLC-F).